The following is a 589-amino-acid chain: Muscarinic acetylcholine receptor M3 (589 aa).

The Extracellular segment spans residues 1–66 (MTLHSNSTTS…DPLGGHTIWQ (66 aa)). N-linked (GlcNAc...) asparagine glycosylation is found at N6, N15, N41, N48, and N52. Residues 67–90 (VVFIAFLTGFLALVTIIGNILVIV) traverse the membrane as a helical segment. Topologically, residues 91 to 103 (AFKVNKQLKTVNN) are cytoplasmic. The chain crosses the membrane as a helical span at residues 104 to 129 (YFLLSLACADLIIGVISMNLFTTYII). At 130 to 141 (MNRWALGNLACD) the chain is on the extracellular side. C140 and C220 are joined by a disulfide. The chain crosses the membrane as a helical span at residues 142–163 (LWLSIDYVASNASVMNLLVISF). The Cytoplasmic portion of the chain corresponds to 164–183 (DRYFSITRPLTYRAKRTTKR). A helical transmembrane segment spans residues 184–205 (AGVMIGLAWVISFVLWAPAILF). Residues 206-228 (WQYFVGKRTVPPGECFIQFLSEP) lie on the Extracellular side of the membrane. Residues 229 to 251 (TITFGTAIAAFYMPVTIMTILYW) traverse the membrane as a helical segment. Over 252-490 (RIYKETEKRT…SLIKEKKAAQ (239 aa)) the chain is Cytoplasmic. The short motif at 274-280 (AEAENFV) is the Basolateral sorting signal element. Positions 323-356 (AEQMDQDHSSSDSWNNNDAAASLENSASSDEEDI) are disordered. The span at 333 to 344 (SDSWNNNDAAAS) shows a compositional bias: low complexity. Phosphoserine is present on S384. The helical transmembrane segment at 491–513 (TLSAILLAFIITWTPYNIMVLVN) threads the bilayer. The Extracellular segment spans residues 514-525 (TFCDSCIPKTYW). C516 and C519 are disulfide-bonded. A helical membrane pass occupies residues 526–545 (NLGYWLCYINSTVNPVCYAL). Topologically, residues 546–589 (CNKTFRTTFKTLLLCQCDKRKRRKQQYQQRQSVIFHKRVPEQAL) are cytoplasmic.

The protein belongs to the G-protein coupled receptor 1 family. Muscarinic acetylcholine receptor subfamily. CHRM3 sub-subfamily. Homodimer; the dimers can form tetramers. Interacts with NALCN. Interacts with TMEM147.

It is found in the cell membrane. The protein resides in the postsynaptic cell membrane. Its subcellular location is the basolateral cell membrane. It localises to the endoplasmic reticulum membrane. Its function is as follows. The muscarinic acetylcholine receptor mediates various cellular responses, including inhibition of adenylate cyclase, breakdown of phosphoinositides and modulation of potassium channels through the action of G proteins. Primary transducing effect is Pi turnover. The chain is Muscarinic acetylcholine receptor M3 (Chrm3) from Rattus norvegicus (Rat).